Here is a 532-residue protein sequence, read N- to C-terminus: 2,3-bisphosphoglycerate-independent phosphoglycerate mutase (532 aa).

The Mn(2+) site is built by Asp15 and Ser65. Ser65 functions as the Phosphoserine intermediate in the catalytic mechanism. Substrate is bound by residues His126, 156-157 (RD), Arg188, Arg194, 258-261 (RPDR), and Lys331. 5 residues coordinate Mn(2+): Asp398, His402, Asp439, His440, and His457.

Belongs to the BPG-independent phosphoglycerate mutase family. Monomer. It depends on Mn(2+) as a cofactor.

The enzyme catalyses (2R)-2-phosphoglycerate = (2R)-3-phosphoglycerate. It participates in carbohydrate degradation; glycolysis; pyruvate from D-glyceraldehyde 3-phosphate: step 3/5. Its function is as follows. Catalyzes the interconversion of 2-phosphoglycerate and 3-phosphoglycerate. This chain is 2,3-bisphosphoglycerate-independent phosphoglycerate mutase, found in Synechocystis sp. (strain ATCC 27184 / PCC 6803 / Kazusa).